A 174-amino-acid chain; its full sequence is Transcription antitermination protein NusB (174 aa).

Residues 1-28 (MVEPKKPFMRKPPPKTGDKKPGDRKANR) are disordered. The span at 16 to 25 (TGDKKPGDRK) shows a compositional bias: basic and acidic residues.

It belongs to the NusB family.

Its function is as follows. Involved in transcription antitermination. Required for transcription of ribosomal RNA (rRNA) genes. Binds specifically to the boxA antiterminator sequence of the ribosomal RNA (rrn) operons. This is Transcription antitermination protein NusB from Rhodopseudomonas palustris (strain BisB5).